Here is a 2422-residue protein sequence, read N- to C-terminus: Interferon-induced very large GTPase 1 (2422 aa).

The tract at residues 945 to 965 is disordered; sequence ENFFEDSDSPTKSSSTEPSPH. A compositionally biased stretch (low complexity) spans 954–963; it reads PTKSSSTEPS. The 242-residue stretch at 1479–1720 folds into the VLIG-type G domain; the sequence is DKRLFVLSIL…KISDVKSRVQ (242 aa). GTP contacts are provided by residues 1489 to 1496, 1542 to 1545, and 1619 to 1622; these read GLQSSGKS, DTEG, and TATD.

This sequence belongs to the TRAFAC class dynamin-like GTPase superfamily. Very large inducible GTPase (VLIG) family.

It localises to the cytoplasm. The protein resides in the cytosol. The protein localises to the nucleus. This is Interferon-induced very large GTPase 1 (GVINP1) from Homo sapiens (Human).